Reading from the N-terminus, the 92-residue chain is DNA-binding protein HU-alpha (92 aa).

Belongs to the bacterial histone-like protein family. In terms of assembly, heterodimer of an alpha and a beta chain.

In terms of biological role, histone-like DNA-binding protein which is capable of wrapping DNA to stabilize it, and thus to prevent its denaturation under extreme environmental conditions. The polypeptide is DNA-binding protein HU-alpha (hupA) (Burkholderia pseudomallei (strain K96243)).